Here is a 541-residue protein sequence, read N- to C-terminus: Glutamyl-tRNA(Gln) amidotransferase subunit B, mitochondrial (541 aa).

Belongs to the GatB/GatE family. GatB subfamily. In terms of assembly, subunit of the heterotrimeric GatFAB amidotransferase (AdT) complex, composed of A (HER2), B (PET112) and F (YGR102C) subunits.

The protein resides in the mitochondrion. The enzyme catalyses L-glutamyl-tRNA(Gln) + L-glutamine + ATP + H2O = L-glutaminyl-tRNA(Gln) + L-glutamate + ADP + phosphate + H(+). In terms of biological role, allows the formation of correctly charged Gln-tRNA(Gln) through the transamidation of misacylated Glu-tRNA(Gln) in the mitochondria. The reaction takes place in the presence of glutamine and ATP through an activated gamma-phospho-Glu-tRNA(Gln). The protein is Glutamyl-tRNA(Gln) amidotransferase subunit B, mitochondrial of Saccharomyces cerevisiae (strain ATCC 204508 / S288c) (Baker's yeast).